The primary structure comprises 431 residues: Gamma-glutamyl phosphate reductase (431 aa).

It belongs to the gamma-glutamyl phosphate reductase family.

The protein resides in the cytoplasm. It catalyses the reaction L-glutamate 5-semialdehyde + phosphate + NADP(+) = L-glutamyl 5-phosphate + NADPH + H(+). The protein operates within amino-acid biosynthesis; L-proline biosynthesis; L-glutamate 5-semialdehyde from L-glutamate: step 2/2. Its function is as follows. Catalyzes the NADPH-dependent reduction of L-glutamate 5-phosphate into L-glutamate 5-semialdehyde and phosphate. The product spontaneously undergoes cyclization to form 1-pyrroline-5-carboxylate. This chain is Gamma-glutamyl phosphate reductase, found in Acetivibrio thermocellus (strain ATCC 27405 / DSM 1237 / JCM 9322 / NBRC 103400 / NCIMB 10682 / NRRL B-4536 / VPI 7372) (Clostridium thermocellum).